Here is a 141-residue protein sequence, read N- to C-terminus: Nucleoside diphosphate kinase (141 aa).

6 residues coordinate ATP: lysine 11, phenylalanine 59, arginine 87, threonine 93, arginine 104, and asparagine 114. The active-site Pros-phosphohistidine intermediate is histidine 117.

Belongs to the NDK family. In terms of assembly, homotetramer. The cofactor is Mg(2+).

It is found in the cytoplasm. The enzyme catalyses a 2'-deoxyribonucleoside 5'-diphosphate + ATP = a 2'-deoxyribonucleoside 5'-triphosphate + ADP. It carries out the reaction a ribonucleoside 5'-diphosphate + ATP = a ribonucleoside 5'-triphosphate + ADP. In terms of biological role, major role in the synthesis of nucleoside triphosphates other than ATP. The ATP gamma phosphate is transferred to the NDP beta phosphate via a ping-pong mechanism, using a phosphorylated active-site intermediate. The polypeptide is Nucleoside diphosphate kinase (Bordetella avium (strain 197N)).